A 353-amino-acid chain; its full sequence is Photosystem II protein D1 (353 aa).

The residue at position 2 (Thr-2) is an N-acetylthreonine. Residue Thr-2 is modified to Phosphothreonine. Transmembrane regions (helical) follow at residues 29 to 46 (YIGW…TATS), 118 to 133 (HFLL…EWEL), and 142 to 156 (WIAV…AATA). His-118 serves as a coordination point for chlorophyll a. A pheophytin a-binding site is contributed by Tyr-126. [CaMn4O5] cluster is bound by residues Asp-170 and Glu-189. The chain crosses the membrane as a helical span at residues 197–218 (FHMLGVAGVFGGSLFSAMHGSL). His-198 lines the chlorophyll a pocket. A quinone-binding positions include His-215 and 264-265 (SF). His-215 lines the Fe cation pocket. His-272 is a binding site for Fe cation. Residues 274–288 (FLAAWPVVGIWFTAL) traverse the membrane as a helical segment. His-332, Glu-333, and Ala-344 together coordinate [CaMn4O5] cluster. A propeptide spanning residues 345-353 (AIEAPAVNG) is cleaved from the precursor.

The protein belongs to the reaction center PufL/M/PsbA/D family. PSII is composed of 1 copy each of membrane proteins PsbA, PsbB, PsbC, PsbD, PsbE, PsbF, PsbH, PsbI, PsbJ, PsbK, PsbL, PsbM, PsbT, PsbX, PsbY, PsbZ, Psb30/Ycf12, at least 3 peripheral proteins of the oxygen-evolving complex and a large number of cofactors. It forms dimeric complexes. The D1/D2 heterodimer binds P680, chlorophylls that are the primary electron donor of PSII, and subsequent electron acceptors. It shares a non-heme iron and each subunit binds pheophytin, quinone, additional chlorophylls, carotenoids and lipids. D1 provides most of the ligands for the Mn4-Ca-O5 cluster of the oxygen-evolving complex (OEC). There is also a Cl(-1) ion associated with D1 and D2, which is required for oxygen evolution. The PSII complex binds additional chlorophylls, carotenoids and specific lipids. serves as cofactor. Tyr-161 forms a radical intermediate that is referred to as redox-active TyrZ, YZ or Y-Z. Post-translationally, C-terminally processed by CTPA; processing is essential to allow assembly of the oxygen-evolving complex and thus photosynthetic growth.

The protein localises to the plastid. The protein resides in the chloroplast thylakoid membrane. The catalysed reaction is 2 a plastoquinone + 4 hnu + 2 H2O = 2 a plastoquinol + O2. Its function is as follows. Photosystem II (PSII) is a light-driven water:plastoquinone oxidoreductase that uses light energy to abstract electrons from H(2)O, generating O(2) and a proton gradient subsequently used for ATP formation. It consists of a core antenna complex that captures photons, and an electron transfer chain that converts photonic excitation into a charge separation. The D1/D2 (PsbA/PsbD) reaction center heterodimer binds P680, the primary electron donor of PSII as well as several subsequent electron acceptors. This is Photosystem II protein D1 from Conocephalum japonicum (Liverwort).